Here is a 101-residue protein sequence, read N- to C-terminus: MMFEHVLVLSVYLFSIGIYGLITSRNMVRALMCLDLILNSVNMNLVTFSDLFDSRQLKGDIFSIFVIAVAAAEAAIGLAIVSSIYRNRKSTRINQSNLLNN.

2 consecutive transmembrane segments (helical) span residues 2-22 (MFEH…YGLI) and 61-81 (IFSI…LAIV).

It belongs to the complex I subunit 4L family. In terms of assembly, NDH is composed of at least 16 different subunits, 5 of which are encoded in the nucleus.

The protein localises to the plastid. The protein resides in the chloroplast thylakoid membrane. It carries out the reaction a plastoquinone + NADH + (n+1) H(+)(in) = a plastoquinol + NAD(+) + n H(+)(out). The enzyme catalyses a plastoquinone + NADPH + (n+1) H(+)(in) = a plastoquinol + NADP(+) + n H(+)(out). Its function is as follows. NDH shuttles electrons from NAD(P)H:plastoquinone, via FMN and iron-sulfur (Fe-S) centers, to quinones in the photosynthetic chain and possibly in a chloroplast respiratory chain. The immediate electron acceptor for the enzyme in this species is believed to be plastoquinone. Couples the redox reaction to proton translocation, and thus conserves the redox energy in a proton gradient. This chain is NAD(P)H-quinone oxidoreductase subunit 4L, chloroplastic, found in Dioscorea elephantipes (Elephant's foot yam).